We begin with the raw amino-acid sequence, 347 residues long: Holliday junction branch migration complex subunit RuvB (347 aa).

Residues 1 to 183 (MTDVPRMVTP…FGIPVRLNFY (183 aa)) form a large ATPase domain (RuvB-L) region. ATP contacts are provided by residues Leu22, Arg23, Gly64, Lys67, Thr68, Thr69, 130 to 132 (EDF), Arg173, Tyr183, and Arg220. Thr68 contacts Mg(2+). Residues 184 to 254 (TVDELEKIVS…IADHALGALE (71 aa)) are small ATPAse domain (RuvB-S). The interval 257-347 (AAGLDAMDRR…QFGLFGGEDE (91 aa)) is head domain (RuvB-H). DNA contacts are provided by Arg293, Arg312, and Arg317.

Belongs to the RuvB family. Homohexamer. Forms an RuvA(8)-RuvB(12)-Holliday junction (HJ) complex. HJ DNA is sandwiched between 2 RuvA tetramers; dsDNA enters through RuvA and exits via RuvB. An RuvB hexamer assembles on each DNA strand where it exits the tetramer. Each RuvB hexamer is contacted by two RuvA subunits (via domain III) on 2 adjacent RuvB subunits; this complex drives branch migration. In the full resolvosome a probable DNA-RuvA(4)-RuvB(12)-RuvC(2) complex forms which resolves the HJ.

Its subcellular location is the cytoplasm. It carries out the reaction ATP + H2O = ADP + phosphate + H(+). Functionally, the RuvA-RuvB-RuvC complex processes Holliday junction (HJ) DNA during genetic recombination and DNA repair, while the RuvA-RuvB complex plays an important role in the rescue of blocked DNA replication forks via replication fork reversal (RFR). RuvA specifically binds to HJ cruciform DNA, conferring on it an open structure. The RuvB hexamer acts as an ATP-dependent pump, pulling dsDNA into and through the RuvAB complex. RuvB forms 2 homohexamers on either side of HJ DNA bound by 1 or 2 RuvA tetramers; 4 subunits per hexamer contact DNA at a time. Coordinated motions by a converter formed by DNA-disengaged RuvB subunits stimulates ATP hydrolysis and nucleotide exchange. Immobilization of the converter enables RuvB to convert the ATP-contained energy into a lever motion, pulling 2 nucleotides of DNA out of the RuvA tetramer per ATP hydrolyzed, thus driving DNA branch migration. The RuvB motors rotate together with the DNA substrate, which together with the progressing nucleotide cycle form the mechanistic basis for DNA recombination by continuous HJ branch migration. Branch migration allows RuvC to scan DNA until it finds its consensus sequence, where it cleaves and resolves cruciform DNA. The protein is Holliday junction branch migration complex subunit RuvB of Nitrobacter hamburgensis (strain DSM 10229 / NCIMB 13809 / X14).